Consider the following 180-residue polypeptide: ATP synthase subunit delta (180 aa).

Belongs to the ATPase delta chain family. F-type ATPases have 2 components, F(1) - the catalytic core - and F(0) - the membrane proton channel. F(1) has five subunits: alpha(3), beta(3), gamma(1), delta(1), epsilon(1). F(0) has three main subunits: a(1), b(2) and c(10-14). The alpha and beta chains form an alternating ring which encloses part of the gamma chain. F(1) is attached to F(0) by a central stalk formed by the gamma and epsilon chains, while a peripheral stalk is formed by the delta and b chains.

Its subcellular location is the cell membrane. In terms of biological role, f(1)F(0) ATP synthase produces ATP from ADP in the presence of a proton or sodium gradient. F-type ATPases consist of two structural domains, F(1) containing the extramembraneous catalytic core and F(0) containing the membrane proton channel, linked together by a central stalk and a peripheral stalk. During catalysis, ATP synthesis in the catalytic domain of F(1) is coupled via a rotary mechanism of the central stalk subunits to proton translocation. Functionally, this protein is part of the stalk that links CF(0) to CF(1). It either transmits conformational changes from CF(0) to CF(1) or is implicated in proton conduction. This is ATP synthase subunit delta from Enterococcus faecalis (strain ATCC 700802 / V583).